A 185-amino-acid chain; its full sequence is Ribosome-recycling factor (185 aa).

This sequence belongs to the RRF family.

The protein localises to the cytoplasm. Functionally, responsible for the release of ribosomes from messenger RNA at the termination of protein biosynthesis. May increase the efficiency of translation by recycling ribosomes from one round of translation to another. This is Ribosome-recycling factor from Enterococcus faecalis (strain ATCC 700802 / V583).